The sequence spans 131 residues: D-ribose pyranase (131 aa).

Histidine 20 serves as the catalytic Proton donor. Substrate is bound by residues aspartate 28, histidine 98, and 120–122 (YAN).

Belongs to the RbsD / FucU family. RbsD subfamily. Homodecamer.

The protein resides in the cytoplasm. The enzyme catalyses beta-D-ribopyranose = beta-D-ribofuranose. It functions in the pathway carbohydrate metabolism; D-ribose degradation; D-ribose 5-phosphate from beta-D-ribopyranose: step 1/2. Functionally, catalyzes the interconversion of beta-pyran and beta-furan forms of D-ribose. This is D-ribose pyranase from Symbiobacterium thermophilum (strain DSM 24528 / JCM 14929 / IAM 14863 / T).